The primary structure comprises 419 residues: DNA ligase (419 aa).

The interval M1–N120 is NTD. Positions R121–L317 are AD domain. Residues H149, K151, E203, and F232 each contribute to the ATP site. The N6-AMP-lysine intermediate role is filled by K151. An a divalent metal cation-binding site is contributed by E203. An a divalent metal cation-binding site is contributed by E291. Positions 294 and 316 each coordinate ATP. The tract at residues K318–I419 is OB domain.

It belongs to the ATP-dependent DNA ligase family. It depends on a divalent metal cation as a cofactor.

Its subcellular location is the virion. It catalyses the reaction ATP + (deoxyribonucleotide)n-3'-hydroxyl + 5'-phospho-(deoxyribonucleotide)m = (deoxyribonucleotide)n+m + AMP + diphosphate.. In terms of biological role, very low-fidelity DNA ligase that seals nicks in double-stranded DNA during DNA repair. Together with the viral repair DNA polymerase X, fills the single nucleotide gaps generated by the AP endonuclease. It is not essential for viral replication and recombination. Displays a very low adenylation activity towards DNA with 3'-dideoxy- or 3'-amino-terminated nicks compared to regular nick DNA. This is DNA ligase (LIG) from Ornithodoros (relapsing fever ticks).